The primary structure comprises 366 residues: UPF0329 protein ECU01_0130/ECU01_1480/ECU08_0060 (366 aa).

Residues 325 to 366 form a disordered region; that stretch reads IRKEEKRIRKEEERAKNEEELLRMVESEEGKSGEGEEGCRRG.

It belongs to the UPF0329 family.

This chain is UPF0329 protein ECU01_0130/ECU01_1480/ECU08_0060, found in Encephalitozoon cuniculi (strain GB-M1) (Microsporidian parasite).